Reading from the N-terminus, the 217-residue chain is Putative N-acetylmuramoyl-L-alanine amidase (217 aa).

One can recognise a MurNAc-LAA domain in the interval 3-206 (IAIDAGHGGQ…ISKSISIALK (204 aa)).

Belongs to the N-acetylmuramoyl-L-alanine amidase 3 family.

It localises to the secreted. The enzyme catalyses Hydrolyzes the link between N-acetylmuramoyl residues and L-amino acid residues in certain cell-wall glycopeptides.. In terms of biological role, cell-wall hydrolase involved in septum cleavage during cell division. The chain is Putative N-acetylmuramoyl-L-alanine amidase (amiB) from Buchnera aphidicola subsp. Baizongia pistaciae (strain Bp).